The primary structure comprises 176 residues: Shikimate kinase (176 aa).

ATP is bound at residue 14–19 (GAGKST). Mg(2+) is bound at residue serine 18. Residues aspartate 36, arginine 60, and glycine 83 each contribute to the substrate site. An ATP-binding site is contributed by arginine 121. Arginine 140 contacts substrate.

Belongs to the shikimate kinase family. As to quaternary structure, monomer. Mg(2+) is required as a cofactor.

The protein localises to the cytoplasm. The catalysed reaction is shikimate + ATP = 3-phosphoshikimate + ADP + H(+). The protein operates within metabolic intermediate biosynthesis; chorismate biosynthesis; chorismate from D-erythrose 4-phosphate and phosphoenolpyruvate: step 5/7. In terms of biological role, catalyzes the specific phosphorylation of the 3-hydroxyl group of shikimic acid using ATP as a cosubstrate. This is Shikimate kinase from Francisella philomiragia subsp. philomiragia (strain ATCC 25017 / CCUG 19701 / FSC 153 / O#319-036).